The following is a 76-amino-acid chain: Large ribosomal subunit protein uL24 (76 aa).

Belongs to the universal ribosomal protein uL24 family. Part of the 50S ribosomal subunit.

In terms of biological role, one of two assembly initiator proteins, it binds directly to the 5'-end of the 23S rRNA, where it nucleates assembly of the 50S subunit. One of the proteins that surrounds the polypeptide exit tunnel on the outside of the subunit. The chain is Large ribosomal subunit protein uL24 from Sulfurimonas denitrificans (strain ATCC 33889 / DSM 1251) (Thiomicrospira denitrificans (strain ATCC 33889 / DSM 1251)).